The sequence spans 429 residues: GDP-fucose protein O-fucosyltransferase 2 (429 aa).

Residues 1 to 21 (MATLSFVFLLLGAVSWPPASA) form the signal peptide. Residue 53–57 (PEGFN) coordinates GDP-beta-L-fucose. Residue E54 is the Proton acceptor of the active site. A disulfide bridge links C161 with C192. 3 N-linked (GlcNAc...) asparagine glycosylation sites follow: N189, N209, and N259. Residues 292–294 (HLR), D371, and 388–389 (TF) each bind GDP-beta-L-fucose. C412 and C419 are disulfide-bonded.

The protein belongs to the glycosyltransferase 68 family.

The protein localises to the endoplasmic reticulum. The protein resides in the golgi apparatus. The catalysed reaction is L-seryl-[protein] + GDP-beta-L-fucose = 3-O-(alpha-L-fucosyl)-L-seryl-[protein] + GDP + H(+). It carries out the reaction L-threonyl-[protein] + GDP-beta-L-fucose = 3-O-(alpha-L-fucosyl)-L-threonyl-[protein] + GDP + H(+). Its pathway is protein modification; protein glycosylation. In terms of biological role, catalyzes the reaction that attaches fucose through an O-glycosidic linkage to a conserved serine or threonine residue in the consensus sequence C1-X-X-S/T-C2 of thrombospondin type I repeats (TSRs) where C1 and C2 are the first and second cysteines of the repeat, respectively. O-fucosylates members of several protein families including the ADAMTS, the thrombospondin (TSP) and spondin families. Required for the proper secretion of ADAMTS family members such as ADAMTSL1 and ADAMTS13. The O-fucosylation of TSRs is also required for restricting epithelial to mesenchymal transition (EMT), maintaining the correct patterning of mesoderm and localization of the definite endoderm. The protein is GDP-fucose protein O-fucosyltransferase 2 (POFUT2) of Pan troglodytes (Chimpanzee).